Here is a 712-residue protein sequence, read N- to C-terminus: Voltage-gated chloride channel TMC4 (712 aa).

Positions M1–V39 are disordered. Topologically, residues M1–R168 are extracellular. N107 carries N-linked (GlcNAc...) asparagine glycosylation. The chain crosses the membrane as a helical span at residues F169 to T189. The Cytoplasmic portion of the chain corresponds to W190 to R249. A helical membrane pass occupies residues L250–L270. Residues H271 to R348 lie on the Extracellular side of the membrane. Residues V349–A369 traverse the membrane as a helical segment. Over T370 to Y394 the chain is Cytoplasmic. The chain crosses the membrane as a helical span at residues L395–A415. The Extracellular segment spans residues P416–Q425. A helical transmembrane segment spans residues I426–F446. Topologically, residues S447–E483 are cytoplasmic. A helical membrane pass occupies residues M484–F504. Topologically, residues P505–V542 are extracellular. The helical transmembrane segment at W543 to Y565 threads the bilayer. Residues L566–P592 are Cytoplasmic-facing. A helical membrane pass occupies residues L593 to I613. At P614–A654 the chain is on the extracellular side. The helical transmembrane segment at F655–Y677 threads the bilayer. Residues G678 to L712 lie on the Cytoplasmic side of the membrane.

This sequence belongs to the TMC family.

It is found in the membrane. The catalysed reaction is chloride(in) = chloride(out). Voltage-gated chloride channel involved in high-concentration salt taste sensation. Depolarization induced by high NaCl concentration may trigger the activation of TMC4-mediated chloride influx into taste bud cells, helping the return to resting potential. Also allows permeation of organic anions including gluconate, but their current amplitudes at positive potentials are less than that of chloride. Involved in pH and temperature-dependent modulation of salty taste. In Homo sapiens (Human), this protein is Voltage-gated chloride channel TMC4.